The sequence spans 345 residues: Isopentenyl-diphosphate delta-isomerase (345 aa).

Residue R14–K15 participates in substrate binding. FMN contacts are provided by residues S71, S72–T74, S102, and N130. S102 to R104 lines the substrate pocket. A substrate-binding site is contributed by Q165. E166 lines the Mg(2+) pocket. FMN contacts are provided by residues K197, T227, G277–K279, and A298–G299.

The protein belongs to the IPP isomerase type 2 family. Homooctamer. Dimer of tetramers. Requires FMN as cofactor. The cofactor is NADPH. It depends on Mg(2+) as a cofactor.

Its subcellular location is the cytoplasm. The enzyme catalyses isopentenyl diphosphate = dimethylallyl diphosphate. Involved in the biosynthesis of isoprenoids. Catalyzes the 1,3-allylic rearrangement of the homoallylic substrate isopentenyl (IPP) to its allylic isomer, dimethylallyl diphosphate (DMAPP). The chain is Isopentenyl-diphosphate delta-isomerase from Rickettsia felis (strain ATCC VR-1525 / URRWXCal2) (Rickettsia azadi).